The chain runs to 292 residues: GTP cyclohydrolase FolE2 (292 aa).

The protein belongs to the GTP cyclohydrolase IV family.

It catalyses the reaction GTP + H2O = 7,8-dihydroneopterin 3'-triphosphate + formate + H(+). The protein operates within cofactor biosynthesis; 7,8-dihydroneopterin triphosphate biosynthesis; 7,8-dihydroneopterin triphosphate from GTP: step 1/1. Functionally, converts GTP to 7,8-dihydroneopterin triphosphate. The chain is GTP cyclohydrolase FolE2 from Staphylococcus aureus (strain Newman).